A 147-amino-acid polypeptide reads, in one-letter code: Hemoglobin subunit gamma-1 (147 aa).

Residue G2 is modified to N-acetylglycine. Positions H3–H147 constitute a Globin domain. Residue T13 is modified to Phosphothreonine. Phosphoserine is present on residues S45, S51, and S53. K60 bears the N6-acetyllysine mark. H64 serves as a coordination point for heme b. K83 carries the post-translational modification N6-acetyllysine. H93 lines the heme b pocket. The residue at position 94 (C94) is an S-nitrosocysteine. At S140 the chain carries Phosphoserine.

This sequence belongs to the globin family. As to quaternary structure, heterotetramer of two alpha chains and two gamma chains in fetal hemoglobin (Hb F). Red blood cells.

Its function is as follows. Gamma chains make up the fetal hemoglobin F, in combination with alpha chains. In Pongo pygmaeus (Bornean orangutan), this protein is Hemoglobin subunit gamma-1 (HBG1).